A 321-amino-acid polypeptide reads, in one-letter code: tRNA uridine(34) hydroxylase (321 aa).

Residues 123-217 (SDPDVTVIDT…YLEEVPEGNS (95 aa)) enclose the Rhodanese domain. Cysteine 177 acts as the Cysteine persulfide intermediate in catalysis. The span at 294–308 (RKGELHIGDRADIAK) shows a compositional bias: basic and acidic residues. Positions 294–321 (RKGELHIGDRADIAKSRTTQGAPSADGE) are disordered.

Belongs to the TrhO family.

It carries out the reaction uridine(34) in tRNA + AH2 + O2 = 5-hydroxyuridine(34) in tRNA + A + H2O. In terms of biological role, catalyzes oxygen-dependent 5-hydroxyuridine (ho5U) modification at position 34 in tRNAs. The chain is tRNA uridine(34) hydroxylase from Teredinibacter turnerae (strain ATCC 39867 / T7901).